The sequence spans 206 residues: Small ribosomal subunit protein uS4 (206 aa).

The tract at residues 18–46 is disordered; it reads NIWGRPKSPVNRREYGPGQHGQRRKGKIS. The 61-residue stretch at 94 to 154 folds into the S4 RNA-binding domain; sequence RRLDAVVYRA…DRSKQMVALI (61 aa).

The protein belongs to the universal ribosomal protein uS4 family. As to quaternary structure, part of the 30S ribosomal subunit. Contacts protein S5. The interaction surface between S4 and S5 is involved in control of translational fidelity.

Functionally, one of the primary rRNA binding proteins, it binds directly to 16S rRNA where it nucleates assembly of the body of the 30S subunit. With S5 and S12 plays an important role in translational accuracy. In Roseobacter denitrificans (strain ATCC 33942 / OCh 114) (Erythrobacter sp. (strain OCh 114)), this protein is Small ribosomal subunit protein uS4.